A 415-amino-acid polypeptide reads, in one-letter code: Serine hydroxymethyltransferase (415 aa).

(6S)-5,6,7,8-tetrahydrofolate-binding positions include leucine 119 and 123–125 (GHL). Lysine 228 carries the N6-(pyridoxal phosphate)lysine modification. Residue 353-355 (SAF) participates in (6S)-5,6,7,8-tetrahydrofolate binding.

Belongs to the SHMT family. In terms of assembly, homodimer. The cofactor is pyridoxal 5'-phosphate.

Its subcellular location is the cytoplasm. It carries out the reaction (6R)-5,10-methylene-5,6,7,8-tetrahydrofolate + glycine + H2O = (6S)-5,6,7,8-tetrahydrofolate + L-serine. Its pathway is one-carbon metabolism; tetrahydrofolate interconversion. It participates in amino-acid biosynthesis; glycine biosynthesis; glycine from L-serine: step 1/1. Its function is as follows. Catalyzes the reversible interconversion of serine and glycine with tetrahydrofolate (THF) serving as the one-carbon carrier. Also exhibits THF-independent aldolase activity toward beta-hydroxyamino acids, producing glycine and aldehydes, via a retro-aldol mechanism. In Haloarcula marismortui (strain ATCC 43049 / DSM 3752 / JCM 8966 / VKM B-1809) (Halobacterium marismortui), this protein is Serine hydroxymethyltransferase.